A 305-amino-acid chain; its full sequence is ATP synthase gamma chain (305 aa).

This sequence belongs to the ATPase gamma chain family. In terms of assembly, F-type ATPases have 2 components, CF(1) - the catalytic core - and CF(0) - the membrane proton channel. CF(1) has five subunits: alpha(3), beta(3), gamma(1), delta(1), epsilon(1). CF(0) has three main subunits: a, b and c.

It localises to the cell membrane. Its function is as follows. Produces ATP from ADP in the presence of a proton gradient across the membrane. The gamma chain is believed to be important in regulating ATPase activity and the flow of protons through the CF(0) complex. The protein is ATP synthase gamma chain of Streptomyces coelicolor (strain ATCC BAA-471 / A3(2) / M145).